We begin with the raw amino-acid sequence, 467 residues long: Ribulose bisphosphate carboxylase large chain (467 aa).

Positions 106 and 156 each coordinate substrate. The Proton acceptor role is filled by Lys-158. Lys-160 contacts substrate. Mg(2+) contacts are provided by Lys-184, Asp-186, and Glu-187. An N6-carboxylysine modification is found at Lys-184. Residue His-276 is the Proton acceptor of the active site. 3 residues coordinate substrate: Arg-277, His-309, and Ser-361.

The protein belongs to the RuBisCO large chain family. Type I subfamily. As to quaternary structure, heterohexadecamer of 8 large chains and 8 small chains. Mg(2+) is required as a cofactor.

The protein localises to the plastid. It localises to the chloroplast. The enzyme catalyses 2 (2R)-3-phosphoglycerate + 2 H(+) = D-ribulose 1,5-bisphosphate + CO2 + H2O. It carries out the reaction D-ribulose 1,5-bisphosphate + O2 = 2-phosphoglycolate + (2R)-3-phosphoglycerate + 2 H(+). In terms of biological role, ruBisCO catalyzes two reactions: the carboxylation of D-ribulose 1,5-bisphosphate, the primary event in carbon dioxide fixation, as well as the oxidative fragmentation of the pentose substrate in the photorespiration process. Both reactions occur simultaneously and in competition at the same active site. The chain is Ribulose bisphosphate carboxylase large chain (rbcL) from Chondrus crispus (Carrageen Irish moss).